A 1077-amino-acid polypeptide reads, in one-letter code: Protein hairless (1077 aa).

Disordered stretches follow at residues 14 to 75 (NRQT…SNNN), 97 to 141 (SSTS…HAKT), 269 to 322 (PSAA…SRPR), 340 to 368 (TLGR…DQQP), 408 to 504 (IEKP…PKAK), 533 to 876 (TTTS…PTSN), and 976 to 1077 (GQPA…LSKH). Composition is skewed to low complexity over residues 26–75 (NINS…SNNN), 115–130 (TTTP…SSST), 269–286 (PSAA…VTTA), and 293–308 (STSL…IQSS). Basic and acidic residues-rich tracts occupy residues 408–439 (IEKP…ESKE) and 449–459 (QPKDETVDVEM). The segment covering 596 to 607 (GSGGASSGGAGG) has biased composition (gly residues). The segment covering 640–684 (PGSSSSSTSPATLSTQPTRLNSSYSIHSLLGGSSGSGSSSFSSSG) has biased composition (low complexity). The span at 704–713 (SMYQPSSSSY) shows a compositional bias: polar residues. Ser720, Ser723, Ser746, and Ser753 each carry phosphoserine. A compositionally biased stretch (polar residues) spans 772-782 (PSTSGSASQDL). Low complexity-rich tracts occupy residues 783–798 (SPPR…TPRT) and 811–829 (ASPS…RSAS). Positions 837-846 (QQQPHLQRSS) are enriched in polar residues. Positions 865–876 (AGSPTSAPPTSN) are enriched in low complexity. The segment covering 984–995 (THPHLAHPHQHP) has biased composition (basic residues). 2 stretches are compositionally biased toward low complexity: residues 996 to 1012 (HPAA…LATP) and 1023 to 1055 (SATS…SSSA). Over residues 1056 to 1070 (MFHTSSLRNEQSSDL) the composition is skewed to polar residues.

As to expression, during embryogenesis expression is primarily in endo- and mesodermal cell layers. Ovary, embryos, larval and pupal imaginal disks.

The protein resides in the nucleus. Is a potent antagonist of neurogenic gene activity during sensory organ development. The expression of distinct cell fates by the trichogen (shaft) / tormogen (socket) sister cell pair depends on the level of H activity. A certain threshold level of H activity is required, below which both sister cells adopt the tormogen fate. In Drosophila melanogaster (Fruit fly), this protein is Protein hairless (H).